Reading from the N-terminus, the 348-residue chain is Serine/threonine-protein kinase SBK2 (348 aa).

The segment at 1–25 is disordered; sequence MPGKQSEEGPAEAGASEDSEEEGLG. Positions 62–330 constitute a Protein kinase domain; sequence YEEVRPLGQG…IREHLGRPWR (269 aa). ATP is bound by residues 68 to 76 and lysine 91; that span reads LGQGCYGRV. Aspartate 183 serves as the catalytic Proton acceptor.

The protein belongs to the protein kinase superfamily. Ser/Thr protein kinase family. STKL subfamily.

The enzyme catalyses L-seryl-[protein] + ATP = O-phospho-L-seryl-[protein] + ADP + H(+). It carries out the reaction L-threonyl-[protein] + ATP = O-phospho-L-threonyl-[protein] + ADP + H(+). The polypeptide is Serine/threonine-protein kinase SBK2 (SBK2) (Homo sapiens (Human)).